The primary structure comprises 124 residues: UPF0382 membrane protein HI_1073 (124 aa).

3 consecutive transmembrane segments (helical) span residues 6 to 26 (LTLV…AAHG), 70 to 90 (SMSS…ALAF), and 95 to 115 (VIVW…ISLA).

Belongs to the UPF0382 family.

The protein localises to the cell membrane. The sequence is that of UPF0382 membrane protein HI_1073 from Haemophilus influenzae (strain ATCC 51907 / DSM 11121 / KW20 / Rd).